A 188-amino-acid chain; its full sequence is dCTP deaminase (188 aa).

Residues 111–116 (KSTYAR), 135–137 (TLE), Gln-156, Tyr-170, and Gln-180 each bind dCTP. The Proton donor/acceptor role is filled by Glu-137.

This sequence belongs to the dCTP deaminase family. As to quaternary structure, homotrimer.

It catalyses the reaction dCTP + H2O + H(+) = dUTP + NH4(+). The protein operates within pyrimidine metabolism; dUMP biosynthesis; dUMP from dCTP (dUTP route): step 1/2. Functionally, catalyzes the deamination of dCTP to dUTP. This chain is dCTP deaminase, found in Nitrosomonas europaea (strain ATCC 19718 / CIP 103999 / KCTC 2705 / NBRC 14298).